We begin with the raw amino-acid sequence, 59 residues long: Large ribosomal subunit protein uL30 (59 aa).

This sequence belongs to the universal ribosomal protein uL30 family. As to quaternary structure, part of the 50S ribosomal subunit.

The chain is Large ribosomal subunit protein uL30 from Syntrophotalea carbinolica (strain DSM 2380 / NBRC 103641 / GraBd1) (Pelobacter carbinolicus).